A 178-amino-acid polypeptide reads, in one-letter code: Large ribosomal subunit protein uL6 (178 aa).

It belongs to the universal ribosomal protein uL6 family. In terms of assembly, part of the 50S ribosomal subunit.

In terms of biological role, this protein binds to the 23S rRNA, and is important in its secondary structure. It is located near the subunit interface in the base of the L7/L12 stalk, and near the tRNA binding site of the peptidyltransferase center. This Corynebacterium aurimucosum (strain ATCC 700975 / DSM 44827 / CIP 107346 / CN-1) (Corynebacterium nigricans) protein is Large ribosomal subunit protein uL6.